Reading from the N-terminus, the 278-residue chain is Neuronal membrane glycoprotein M6-a (278 aa).

Position 1 is an N-acetylmethionine (Met-1). The Cytoplasmic portion of the chain corresponds to 1 to 22 (MEENMEEGQTQKGCFECCIKCL). The helical transmembrane segment at 23–43 (GGIPYASLIATILLYAGVALF) threads the bilayer. Topologically, residues 44-84 (CGCGHEALSGTVNILQTYFEMARTAGDTLDVFTMIDIFKYV) are extracellular. Residues 85–105 (IYGIAAAFFVYGILLMVEGFF) form a helical membrane-spanning segment. The Cytoplasmic segment spans residues 106-127 (TTGAIKDLYGDFKITTCGRCVS). The chain crosses the membrane as a helical span at residues 128–148 (AWFIMLTYLFMLAWLGVTAFT). Residues 149–213 (SLPVYMYFNV…STELNMTFHL (65 aa)) are Extracellular-facing. Asn-164 carries an N-linked (GlcNAc...) asparagine glycan. A disulfide bridge connects residues Cys-174 and Cys-192. N-linked (GlcNAc...) asparagine glycosylation is present at Asn-208. Residues 214–234 (FIVALAGAGAAVIAMVHYLMV) form a helical membrane-spanning segment. Residues 235–278 (LSANWAYVKDACRMQKYEDIKSKEEQELHDIHSTRSKERLNAYT) lie on the Cytoplasmic side of the membrane. Ser-256 carries the phosphoserine modification. Position 278 is a phosphothreonine (Thr-278).

Belongs to the myelin proteolipid protein family. In terms of assembly, interacts with OPRM1. Interacts with palmitoyltransferase ZDHHC17/HIP14; the interaction leads to palmitoylation of GPM6A. Post-translationally, N-glycosylated. Palmitoylated by ZDHHC17/HIP14. As to expression, expressed in hippocampus (at protein level). Isoform 1 is the predominant isoform expressed in brain, specifically in hippocampus. Isoform 2 is expressed at low levels in brain and kidney.

It is found in the cell membrane. The protein localises to the cell projection. Its subcellular location is the axon. It localises to the growth cone. The protein resides in the dendritic spine. It is found in the filopodium. The protein localises to the neuron projection. In terms of biological role, involved in neuronal differentiation, including differentiation and migration of neuronal stem cells. Plays a role in neuronal plasticity and is involved in neurite and filopodia outgrowth, filopodia motility and probably synapse formation. Gpm6a-induced filopodia formation involves mitogen-activated protein kinase (MAPK) and Src signaling pathways. May be involved in neuronal NGF-dependent Ca(2+) influx. May be involved in regulation of endocytosis and intracellular trafficking of G-protein-coupled receptors (GPCRs); enhances internalization and recycling of mu-type opioid receptor. The polypeptide is Neuronal membrane glycoprotein M6-a (Gpm6a) (Rattus norvegicus (Rat)).